Here is a 228-residue protein sequence, read N- to C-terminus: Tol-Pal system protein TolQ (228 aa).

The next 3 helical transmembrane spans lie at 16–36 (IVVQ…WAII), 137–157 (VSPY…FMAL), and 172–192 (IAEA…AVMA).

This sequence belongs to the ExbB/TolQ family. The Tol-Pal system is composed of five core proteins: the inner membrane proteins TolA, TolQ and TolR, the periplasmic protein TolB and the outer membrane protein Pal. They form a network linking the inner and outer membranes and the peptidoglycan layer.

Its subcellular location is the cell inner membrane. Its function is as follows. Part of the Tol-Pal system, which plays a role in outer membrane invagination during cell division and is important for maintaining outer membrane integrity. The protein is Tol-Pal system protein TolQ of Haemophilus influenzae (strain ATCC 51907 / DSM 11121 / KW20 / Rd).